Consider the following 451-residue polypeptide: 2-succinylbenzoate--CoA ligase (451 aa).

It belongs to the ATP-dependent AMP-binding enzyme family. MenE subfamily.

The enzyme catalyses 2-succinylbenzoate + ATP + CoA = 2-succinylbenzoyl-CoA + AMP + diphosphate. Its pathway is quinol/quinone metabolism; 1,4-dihydroxy-2-naphthoate biosynthesis; 1,4-dihydroxy-2-naphthoate from chorismate: step 5/7. It functions in the pathway quinol/quinone metabolism; menaquinone biosynthesis. Its function is as follows. Converts 2-succinylbenzoate (OSB) to 2-succinylbenzoyl-CoA (OSB-CoA). The chain is 2-succinylbenzoate--CoA ligase from Lactococcus lactis subsp. lactis (strain IL1403) (Streptococcus lactis).